The chain runs to 395 residues: Multidrug resistance protein MdtL (395 aa).

The next 12 helical transmembrane spans lie at 4 to 24, 42 to 62, 69 to 89, 93 to 113, 131 to 151, 158 to 178, 217 to 237, 247 to 267, 271 to 291, 295 to 315, 333 to 353, and 358 to 378; these read FLLC…MYLV, IAFS…GKIA, PVAI…SRAS, LFLS…VVAF, LLNG…HLIM, SLFY…LFIL, VSVI…VMGF, ALTA…LGLF, TLML…SLAH, VTLF…GVAM, LGIA…ILGI, and MLIG…FSVA.

Belongs to the major facilitator superfamily. DHA1 family. MdtL (TC 2.A.1.2.22) subfamily.

The protein localises to the cell inner membrane. The polypeptide is Multidrug resistance protein MdtL (Salmonella agona (strain SL483)).